Consider the following 88-residue polypeptide: Small ribosomal subunit protein uS15 (88 aa).

It belongs to the universal ribosomal protein uS15 family. As to quaternary structure, part of the 30S ribosomal subunit. Forms a bridge to the 50S subunit in the 70S ribosome, contacting the 23S rRNA.

Functionally, one of the primary rRNA binding proteins, it binds directly to 16S rRNA where it helps nucleate assembly of the platform of the 30S subunit by binding and bridging several RNA helices of the 16S rRNA. In terms of biological role, forms an intersubunit bridge (bridge B4) with the 23S rRNA of the 50S subunit in the ribosome. This chain is Small ribosomal subunit protein uS15, found in Methylacidiphilum infernorum (isolate V4) (Methylokorus infernorum (strain V4)).